The sequence spans 256 residues: Expansin-like B1 (256 aa).

The signal sequence occupies residues 1–24 (MAQLLRRHLPVILSLILFLSKATA). Residue Asn27 is glycosylated (N-linked (GlcNAc...) asparagine). Residues 46 to 150 (NGACEYGAFG…RRVSCTYPNK (105 aa)) form the Expansin-like EG45 domain. The region spanning 164-249 (NYLEFEIWYQ…NWTAGATYDS (86 aa)) is the Expansin-like CBD domain. N-linked (GlcNAc...) asparagine glycosylation is found at Asn189 and Asn240.

This sequence belongs to the expansin family. Expansin-like B subfamily.

The protein localises to the secreted. This Oryza sativa subsp. japonica (Rice) protein is Expansin-like B1 (EXLB1).